Reading from the N-terminus, the 300-residue chain is Ribosomal protein L11 methyltransferase (300 aa).

Residues Thr141, Gly164, Asp186, and Asn233 each contribute to the S-adenosyl-L-methionine site.

This sequence belongs to the methyltransferase superfamily. PrmA family.

It localises to the cytoplasm. It catalyses the reaction L-lysyl-[protein] + 3 S-adenosyl-L-methionine = N(6),N(6),N(6)-trimethyl-L-lysyl-[protein] + 3 S-adenosyl-L-homocysteine + 3 H(+). Functionally, methylates ribosomal protein L11. The sequence is that of Ribosomal protein L11 methyltransferase from Synechocystis sp. (strain ATCC 27184 / PCC 6803 / Kazusa).